We begin with the raw amino-acid sequence, 168 residues long: uncharacterized protein (168 aa).

Helical transmembrane passes span 4–24 and 94–114; these read IIAL…PEEE and IMVG…GFAW.

It to A.aeolicus aq_1446.

It localises to the cell membrane. This is an uncharacterized protein from Aquifex aeolicus (strain VF5).